The primary structure comprises 356 residues: Histidinol-phosphate aminotransferase (356 aa).

Lysine 214 carries the post-translational modification N6-(pyridoxal phosphate)lysine.

This sequence belongs to the class-II pyridoxal-phosphate-dependent aminotransferase family. Histidinol-phosphate aminotransferase subfamily. In terms of assembly, homodimer. Pyridoxal 5'-phosphate is required as a cofactor.

It catalyses the reaction L-histidinol phosphate + 2-oxoglutarate = 3-(imidazol-4-yl)-2-oxopropyl phosphate + L-glutamate. The protein operates within amino-acid biosynthesis; L-histidine biosynthesis; L-histidine from 5-phospho-alpha-D-ribose 1-diphosphate: step 7/9. The chain is Histidinol-phosphate aminotransferase from Escherichia coli O45:K1 (strain S88 / ExPEC).